The following is a 472-amino-acid chain: Trigger factor (472 aa).

One can recognise a PPIase FKBP-type domain in the interval 174–261 (GDIALVSFKG…LEDLKIKELP (88 aa)). The tract at residues 438-472 (EKTPEKARDQIKEKSSKKKTTKTNKEKKSSKTPKS) is disordered. A compositionally biased stretch (basic and acidic residues) spans 439–451 (KTPEKARDQIKEK).

The protein belongs to the FKBP-type PPIase family. Tig subfamily.

Its subcellular location is the cytoplasm. It catalyses the reaction [protein]-peptidylproline (omega=180) = [protein]-peptidylproline (omega=0). Its function is as follows. Involved in protein export. Acts as a chaperone by maintaining the newly synthesized protein in an open conformation. Functions as a peptidyl-prolyl cis-trans isomerase. The sequence is that of Trigger factor from Prochlorococcus marinus (strain NATL2A).